A 452-amino-acid chain; its full sequence is Activating transcription factor 7-interacting protein 2 (452 aa).

Position 184 is a phosphoserine (S184). Residues 185–206 form a disordered region; sequence RSKRISSVNHTPLNSSEKAGRK. S257 carries the post-translational modification Phosphoserine. In terms of domain architecture, Fibronectin type-III spans 346–450; that stretch reads PPQKPELKVK…IKSIPRFSEN (105 aa).

It belongs to the MCAF family. As to quaternary structure, interacts with MBD1, SETDB1 and SP1. Probably forms a complex with SETDB1 and MBD1. Expressed in testis.

The protein resides in the nucleus. In terms of biological role, recruiter that couples transcriptional factors to general transcription apparatus and thereby modulates transcription regulation and chromatin formation. Can both act as an activator or a repressor depending on the context. Mediates MBD1-dependent transcriptional repression, probably by recruiting complexes containing SETDB1. The complex formed with MBD1 and SETDB1 represses transcription and probably couples DNA methylation and histone H3 'Lys-9' trimethylation (H3K9me3) activity. The polypeptide is Activating transcription factor 7-interacting protein 2 (Atf7ip2) (Mus musculus (Mouse)).